The primary structure comprises 339 residues: MTRISLTRYLVEEQRKHNTIQPELRLLIEVVARACKAISNSVNKGALAGVLGSAGTGNVQGETQQKLDVIANEVLLDANEWGGHLAAMASEEMESFYEIPNRYPKGEYLLMFDPLDGSSNIDVNVSIGTIFSVLHMPKPGQTVTEADFLQPGTHQVAAGYAVYGPQTTLVLTVGNGVHVFTLDREAGSFVLTQSDVQIPEDTKEFAINMSNMRHWAPPVRKYIDECLAGDEGPRGKNFNMRWIASMVADVHRILTRGGIFMYPWDKREPEKAGKLRLMYEANPMAMLIEQAGGAATNGHIRILDVQPEKLHQRVSVILGSKNEVERVTRYHHEAAGQQG.

Residues Glu91, Asp113, Leu115, and Asp116 each coordinate Mg(2+). Residues 116–119 (DGSS), Asn208, and Lys274 each bind substrate. Glu280 serves as a coordination point for Mg(2+).

It belongs to the FBPase class 1 family. In terms of assembly, homotetramer. Mg(2+) serves as cofactor.

Its subcellular location is the cytoplasm. It catalyses the reaction beta-D-fructose 1,6-bisphosphate + H2O = beta-D-fructose 6-phosphate + phosphate. The protein operates within carbohydrate biosynthesis; gluconeogenesis. This is Fructose-1,6-bisphosphatase class 1 from Cupriavidus pinatubonensis (strain JMP 134 / LMG 1197) (Cupriavidus necator (strain JMP 134)).